We begin with the raw amino-acid sequence, 155 residues long: Probable tellurium resistance transcriptional regulator TerW (155 aa).

Functionally, involved in tellurite resistance. TerW binds specifically to the potential promoter region of the terZABCDE operon and probably regulates expression of the genes. The sequence is that of Probable tellurium resistance transcriptional regulator TerW from Escherichia coli.